The chain runs to 530 residues: ATP synthase subunit alpha 3 (530 aa).

Gly-174–Thr-181 contributes to the ATP binding site. Residues Thr-507–Ala-522 are compositionally biased toward low complexity. Residues Thr-507 to Pro-530 are disordered.

This sequence belongs to the ATPase alpha/beta chains family. In terms of assembly, F-type ATPases have 2 components, CF(1) - the catalytic core - and CF(0) - the membrane proton channel. CF(1) has five subunits: alpha(3), beta(3), gamma(1), delta(1), epsilon(1). CF(0) has three main subunits: a(1), b(2) and c(9-12). The alpha and beta chains form an alternating ring which encloses part of the gamma chain. CF(1) is attached to CF(0) by a central stalk formed by the gamma and epsilon chains, while a peripheral stalk is formed by the delta and b chains.

It is found in the cell inner membrane. It catalyses the reaction ATP + H2O + 4 H(+)(in) = ADP + phosphate + 5 H(+)(out). In terms of biological role, produces ATP from ADP in the presence of a proton gradient across the membrane. The alpha chain is a regulatory subunit. The protein is ATP synthase subunit alpha 3 of Paraburkholderia xenovorans (strain LB400).